The following is a 729-amino-acid chain: Phosphoribosylformylglycinamidine synthase subunit PurL (729 aa).

Residue histidine 54 is part of the active site. 2 residues coordinate ATP: tyrosine 57 and lysine 96. Glutamate 98 lines the Mg(2+) pocket. Residues 99–102 (SHNH) and arginine 121 contribute to the substrate site. The Proton acceptor role is filled by histidine 100. Aspartate 122 contributes to the Mg(2+) binding site. Glutamine 245 is a binding site for substrate. Aspartate 273 is a Mg(2+) binding site. Residue 317 to 319 (ETQ) participates in substrate binding. Positions 495 and 532 each coordinate ATP. Asparagine 533 provides a ligand contact to Mg(2+). Serine 535 is a binding site for substrate.

It belongs to the FGAMS family. In terms of assembly, monomer. Part of the FGAM synthase complex composed of 1 PurL, 1 PurQ and 2 PurS subunits.

The protein localises to the cytoplasm. It carries out the reaction N(2)-formyl-N(1)-(5-phospho-beta-D-ribosyl)glycinamide + L-glutamine + ATP + H2O = 2-formamido-N(1)-(5-O-phospho-beta-D-ribosyl)acetamidine + L-glutamate + ADP + phosphate + H(+). Its pathway is purine metabolism; IMP biosynthesis via de novo pathway; 5-amino-1-(5-phospho-D-ribosyl)imidazole from N(2)-formyl-N(1)-(5-phospho-D-ribosyl)glycinamide: step 1/2. Part of the phosphoribosylformylglycinamidine synthase complex involved in the purines biosynthetic pathway. Catalyzes the ATP-dependent conversion of formylglycinamide ribonucleotide (FGAR) and glutamine to yield formylglycinamidine ribonucleotide (FGAM) and glutamate. The FGAM synthase complex is composed of three subunits. PurQ produces an ammonia molecule by converting glutamine to glutamate. PurL transfers the ammonia molecule to FGAR to form FGAM in an ATP-dependent manner. PurS interacts with PurQ and PurL and is thought to assist in the transfer of the ammonia molecule from PurQ to PurL. The protein is Phosphoribosylformylglycinamidine synthase subunit PurL of Staphylococcus carnosus (strain TM300).